The following is a 129-amino-acid chain: Small ribosomal subunit protein uS11c (129 aa).

It belongs to the universal ribosomal protein uS11 family. In terms of assembly, part of the 30S ribosomal subunit.

The protein resides in the plastid. The protein localises to the chloroplast. The protein is Small ribosomal subunit protein uS11c of Cyanidium caldarium (Red alga).